Consider the following 276-residue polypeptide: 2-dehydro-3-deoxyphosphooctonate aldolase (276 aa).

It belongs to the KdsA family.

It is found in the cytoplasm. The enzyme catalyses D-arabinose 5-phosphate + phosphoenolpyruvate + H2O = 3-deoxy-alpha-D-manno-2-octulosonate-8-phosphate + phosphate. Its pathway is carbohydrate biosynthesis; 3-deoxy-D-manno-octulosonate biosynthesis; 3-deoxy-D-manno-octulosonate from D-ribulose 5-phosphate: step 2/3. It functions in the pathway bacterial outer membrane biogenesis; lipopolysaccharide biosynthesis. The polypeptide is 2-dehydro-3-deoxyphosphooctonate aldolase (Xylella fastidiosa (strain M23)).